The following is a 398-amino-acid chain: Riboflavin transporter RfnT (398 aa).

The next 12 helical transmembrane spans lie at 13–35 (ILTI…GGLV), 45–67 (LVTL…AAFF), 74–91 (RNAY…GVIA), 95–117 (IFAA…ASYV), 137–156 (ISWV…QLVI), 166–188 (MFAG…LFML), 220–242 (VAAG…IAMV), 252–274 (ALGI…KLIT), 281–300 (ITAL…LGGF), 305–324 (FWGA…IGAT), 345–367 (FIMF…SSGW), and 372–389 (WLVF…ILRL).

The protein belongs to the major facilitator superfamily.

The protein resides in the cell membrane. In terms of biological role, transports riboflavin into the cell. In Brucella anthropi (strain ATCC 49188 / DSM 6882 / CCUG 24695 / JCM 21032 / LMG 3331 / NBRC 15819 / NCTC 12168 / Alc 37) (Ochrobactrum anthropi), this protein is Riboflavin transporter RfnT.